We begin with the raw amino-acid sequence, 68 residues long: Cytotoxic linear peptide (68 aa).

An N-terminal signal peptide occupies residues 1 to 23; sequence MKTQFAILLIALVLFQMFSQSEA. Leucine amide is present on Leu-36. Positions 40 to 68 are excised as a propeptide; sequence GLNELDDLDELFDGEISQADIDFLKELMS.

It belongs to the non-disulfide-bridged peptide (NDBP) superfamily. Short antimicrobial peptide (group 4) family. Expressed by the venom gland.

Its subcellular location is the secreted. The protein resides in the target cell membrane. Functionally, amphipathic peptide that has antibacterial activities. The polypeptide is Cytotoxic linear peptide (Pandinus cavimanus (Tanzanian red clawed scorpion)).